A 125-amino-acid polypeptide reads, in one-letter code: Small ribosomal subunit protein uS17 (125 aa).

2 disordered regions span residues 1-21 (MSSS…VSSR) and 101-125 (VAAQ…APQA).

The protein belongs to the universal ribosomal protein uS17 family. As to quaternary structure, part of the 30S ribosomal subunit.

Its function is as follows. One of the primary rRNA binding proteins, it binds specifically to the 5'-end of 16S ribosomal RNA. The protein is Small ribosomal subunit protein uS17 of Opitutus terrae (strain DSM 11246 / JCM 15787 / PB90-1).